The primary structure comprises 232 residues: tRNA (guanine-N(1)-)-methyltransferase (232 aa).

Residues G111 and 131–136 contribute to the S-adenosyl-L-methionine site; that span reads IGDYIL.

Belongs to the RNA methyltransferase TrmD family. Homodimer.

Its subcellular location is the cytoplasm. It catalyses the reaction guanosine(37) in tRNA + S-adenosyl-L-methionine = N(1)-methylguanosine(37) in tRNA + S-adenosyl-L-homocysteine + H(+). Functionally, specifically methylates guanosine-37 in various tRNAs. The protein is tRNA (guanine-N(1)-)-methyltransferase of Bartonella henselae (strain ATCC 49882 / DSM 28221 / CCUG 30454 / Houston 1) (Rochalimaea henselae).